A 452-amino-acid polypeptide reads, in one-letter code: Na(+)/H(+) antiporter NhaA (452 aa).

11 helical membrane-spanning segments follow: residues 23–43 (MMLF…LSTI), 71–91 (LLQF…GLEI), 108–128 (LPIV…LLVV), 136–156 (GAAI…AVLG), 165–185 (VFLT…IALF), 189–209 (HINI…YLMG), 216–236 (LGLY…SGIH), 316–336 (IVGY…TLGG), 349–369 (VFLG…YGFV), 385–405 (LMAV…IATL), and 418–438 (EAKL…IVTL).

It belongs to the NhaA Na(+)/H(+) (TC 2.A.33) antiporter family.

The protein localises to the cell inner membrane. The catalysed reaction is Na(+)(in) + 2 H(+)(out) = Na(+)(out) + 2 H(+)(in). In terms of biological role, na(+)/H(+) antiporter that extrudes sodium in exchange for external protons. The chain is Na(+)/H(+) antiporter NhaA from Porphyromonas gingivalis (strain ATCC BAA-308 / W83).